The sequence spans 510 residues: RanBP-type and C3HC4-type zinc finger-containing protein 1 (510 aa).

The residue at position 1 (M1) is an N-acetylmethionine. The tract at residues 1 to 220 is interaction with IRF3; sequence MDEKTKKAEE…PGCEMCCRAR (220 aa). The interaction with TAB2 stretch occupies residues 1–270; that stretch reads MDEKTKKAEE…NYLQHVQLDQ (270 aa). S50 carries the post-translational modification Phosphoserine. One can recognise a Ubiquitin-like domain in the interval 55-119; the sequence is IRLWVSVEDA…DQETLHSHGV (65 aa). Positions 69–131 are interaction with RNF31; that stretch reads VTIWLTVRPD…NGDSAYLYLL (63 aa). The tract at residues 160–192 is disordered; it reads LTLQPRGPLEPGPPKPGVPQEPGRGQPDAVPEP. A compositionally biased stretch (pro residues) spans 167–178; it reads PLEPGPPKPGVP. The RanBP2-type zinc finger occupies 193-222; that stretch reads PPVGWQCPGCTFINKPTRPGCEMCCRARPE. Positions 233-261 form a coiled coil; the sequence is DEEERARLAGEEEALRQYQQRKQQQQEGN. Residues 278-506 are TRIAD supradomain; that stretch reads EPAECPVCYS…VNGIPCHPSC (229 aa). Zn(2+) contacts are provided by C282, C285, C300, H302, C305, C308, and C323. Residues 282 to 332 form an RING-type 1 zinc finger; it reads CPVCYSVLAPGEAVVLRECLHTFCRECLQGTIRNSQEAEVSCPFIDNTYSC. Y330 bears the Phosphotyrosine mark. Residues C332, C371, C376, C391, C394, C399, C402, H406, C411, C447, and C450 each coordinate Zn(2+). An IBR-type zinc finger spans residues 351–411; the sequence is QRFLDLGISI…CKAIHEQMNC (61 aa). The segment at 447-476 adopts an RING-type 2; atypical zinc-finger fold; it reads CPQCQIVVQKKDGCDWIRCTVCHTEICWVT. C460 is a catalytic residue. Positions 465 and 468 each coordinate Zn(2+).

It belongs to the RBR family. In terms of assembly, component of the LUBAC complex (linear ubiquitin chain assembly complex) which consists of SHARPIN, RBCK1 and RNF31. LUBAC has a MW of approximately 600 kDa suggesting a heteromultimeric assembly of its subunits. Interacts with beta-I-type (PRKCB1) and zeta-type protein kinase C (PRKCZ). Interacts with UBE2L3. Interacts with PRKCH. Associates with the TNF-R1 signaling complex (TNF-RSC) in a stimulation-dependent manner. Interacts with EYA1, TAB2, TAB3, MAP3K7 TRAF6 and RIPK1. Interacts with IRF3. Interacts with IREB2 only in iron-rich conditions. As to quaternary structure, (Microbial infection) Interacts with hepatitis B virus/HBV protein HBx; this interaction is required to activate transcription of the viral genome. Auto-ubiquitinated. Auto-ubiquitination leads to degradation by the proteasome. In terms of processing, phosphorylated. In vitro, phosphorylation inhibits auto-ubiquitination activity. Post-translationally, (Microbial infection) Ubiquitinated by S.flexneri E3 ubiquitin-protein ligases IpaH1.4 and IpaH2.5, leading to its degradation by the proteasome, thereby preventing formation of the bacterial ubiquitin coat and activation of innate immunity.

It carries out the reaction [E2 ubiquitin-conjugating enzyme]-S-ubiquitinyl-L-cysteine + [acceptor protein]-L-lysine = [E2 ubiquitin-conjugating enzyme]-L-cysteine + [acceptor protein]-N(6)-ubiquitinyl-L-lysine.. Its pathway is protein modification; protein ubiquitination. Functionally, E3 ubiquitin-protein ligase, which accepts ubiquitin from specific E2 ubiquitin-conjugating enzymes, such as UBE2L3/UBCM4, and then transfers it to substrates. Functions as an E3 ligase for oxidized IREB2 and both heme and oxygen are necessary for IREB2 ubiquitination. Promotes ubiquitination of TAB2 and IRF3 and their degradation by the proteasome. Component of the LUBAC complex which conjugates linear ('Met-1'-linked) polyubiquitin chains to substrates and plays a key role in NF-kappa-B activation and regulation of inflammation. LUBAC conjugates linear polyubiquitin to IKBKG and RIPK1 and is involved in activation of the canonical NF-kappa-B and the JNK signaling pathways. Linear ubiquitination mediated by the LUBAC complex interferes with TNF-induced cell death and thereby prevents inflammation. LUBAC is recruited to the TNF-R1 signaling complex (TNF-RSC) following polyubiquitination of TNF-RSC components by BIRC2 and/or BIRC3 and to conjugate linear polyubiquitin to IKBKG and possibly other components contributing to the stability of the complex. The LUBAC complex is also involved in innate immunity by conjugating linear polyubiquitin chains at the surface of bacteria invading the cytosol to form the ubiquitin coat surrounding bacteria. LUBAC is not able to initiate formation of the bacterial ubiquitin coat, and can only promote formation of linear polyubiquitins on pre-existing ubiquitin. The bacterial ubiquitin coat acts as an 'eat-me' signal for xenophagy and promotes NF-kappa-B activation. Together with OTULIN, the LUBAC complex regulates the canonical Wnt signaling during angiogenesis. Binds polyubiquitin of different linkage types. The sequence is that of RanBP-type and C3HC4-type zinc finger-containing protein 1 (RBCK1) from Homo sapiens (Human).